The following is a 227-amino-acid chain: Cytochrome c oxidase subunit 2 (227 aa).

Topologically, residues 1–14 (MAYPFQLGLQDATS) are mitochondrial intermembrane. Residues 15–45 (PIMEELTNFHDHTLMIVFLISSLVLYIISLM) form a helical membrane-spanning segment. The Mitochondrial matrix portion of the chain corresponds to 46–59 (LTTKLTHTNTMDAQ). Residues 60–87 (EVETIWTILPAVILILIALPSLRILYMM) form a helical membrane-spanning segment. The Mitochondrial intermembrane portion of the chain corresponds to 88 to 227 (DEINNPALTV…HFENWSASMI (140 aa)). Residues His-161, Cys-196, Glu-198, Cys-200, His-204, and Met-207 each coordinate Cu cation. Mg(2+) is bound at residue Glu-198.

Belongs to the cytochrome c oxidase subunit 2 family. Component of the cytochrome c oxidase (complex IV, CIV), a multisubunit enzyme composed of 14 subunits. The complex is composed of a catalytic core of 3 subunits MT-CO1, MT-CO2 and MT-CO3, encoded in the mitochondrial DNA, and 11 supernumerary subunits COX4I, COX5A, COX5B, COX6A, COX6B, COX6C, COX7A, COX7B, COX7C, COX8 and NDUFA4, which are encoded in the nuclear genome. The complex exists as a monomer or a dimer and forms supercomplexes (SCs) in the inner mitochondrial membrane with NADH-ubiquinone oxidoreductase (complex I, CI) and ubiquinol-cytochrome c oxidoreductase (cytochrome b-c1 complex, complex III, CIII), resulting in different assemblies (supercomplex SCI(1)III(2)IV(1) and megacomplex MCI(2)III(2)IV(2)). Found in a complex with TMEM177, COA6, COX18, COX20, SCO1 and SCO2. Interacts with TMEM177 in a COX20-dependent manner. Interacts with COX20. Interacts with COX16. The cofactor is Cu cation.

The protein resides in the mitochondrion inner membrane. It carries out the reaction 4 Fe(II)-[cytochrome c] + O2 + 8 H(+)(in) = 4 Fe(III)-[cytochrome c] + 2 H2O + 4 H(+)(out). Component of the cytochrome c oxidase, the last enzyme in the mitochondrial electron transport chain which drives oxidative phosphorylation. The respiratory chain contains 3 multisubunit complexes succinate dehydrogenase (complex II, CII), ubiquinol-cytochrome c oxidoreductase (cytochrome b-c1 complex, complex III, CIII) and cytochrome c oxidase (complex IV, CIV), that cooperate to transfer electrons derived from NADH and succinate to molecular oxygen, creating an electrochemical gradient over the inner membrane that drives transmembrane transport and the ATP synthase. Cytochrome c oxidase is the component of the respiratory chain that catalyzes the reduction of oxygen to water. Electrons originating from reduced cytochrome c in the intermembrane space (IMS) are transferred via the dinuclear copper A center (CU(A)) of subunit 2 and heme A of subunit 1 to the active site in subunit 1, a binuclear center (BNC) formed by heme A3 and copper B (CU(B)). The BNC reduces molecular oxygen to 2 water molecules using 4 electrons from cytochrome c in the IMS and 4 protons from the mitochondrial matrix. The sequence is that of Cytochrome c oxidase subunit 2 (MT-CO2) from Sundamys muelleri (Mueller's giant sunda rat).